Here is a 1150-residue protein sequence, read N- to C-terminus: uncharacterized protein (1150 aa).

Belongs to the TMEM1 family.

This is an uncharacterized protein from Schizosaccharomyces pombe (strain 972 / ATCC 24843) (Fission yeast).